The sequence spans 1129 residues: BLOC-2 complex member HPS5 (1129 aa).

Residues 483-503 (EFTSQQEEDLPDQCCGSHGNE) form a disordered region. Phosphoserine is present on residues Ser-532 and Ser-534. The interval 561–609 (HTSPDLKVRPELRGDEQSCEEDVSSDTCPKEEDTEEEKEVTSPPPEEDR) is disordered. The segment covering 564–576 (PDLKVRPELRGDE) has biased composition (basic and acidic residues). Ser-695 is modified (phosphoserine).

It belongs to the HPS5 family. Component of the biogenesis of lysosome-related organelles complex-2 (or BLOC2) composed of HPS3, HPS5 and HPS6. Interacts with HPS6. Interacts with HPS3. May interact with all alpha-integrin chains that have an aromatic residue before the first lysine of the conserved KXGFFKR motif, including ITGA2, ITGA3, ITGA5 and ITGA6. Widely expressed. Isoform 1:Highly expressed in lungs and testis. Isoform 2:Highly expressed in placenta, kidney, testis ovary, lung and thymus.

It localises to the cytoplasm. Its subcellular location is the cytosol. Its function is as follows. May regulate the synthesis and function of lysosomes and of highly specialized organelles, such as melanosomes and platelet dense granules. Regulates intracellular vesicular trafficking in fibroblasts. May be involved in the regulation of general functions of integrins. The polypeptide is BLOC-2 complex member HPS5 (HPS5) (Homo sapiens (Human)).